The sequence spans 49 residues: Large ribosomal subunit protein bL33B (49 aa).

The protein belongs to the bacterial ribosomal protein bL33 family.

This is Large ribosomal subunit protein bL33B from Bacillus cereus (strain ATCC 14579 / DSM 31 / CCUG 7414 / JCM 2152 / NBRC 15305 / NCIMB 9373 / NCTC 2599 / NRRL B-3711).